Reading from the N-terminus, the 378-residue chain is Putative methyltransferase spot-1 (378 aa).

Belongs to the class IV-like SAM-binding methyltransferase superfamily.

The protein localises to the cytoplasm. The protein resides in the cytoskeleton. It localises to the spindle. Its subcellular location is the chromosome. It is found in the centromere. The protein localises to the kinetochore. The protein resides in the microtubule organizing center. It localises to the centrosome. In terms of biological role, required for association of the centrosomes with the poles of the bipolar mitotic spindle during metaphase. The sequence is that of Putative methyltransferase spot-1 from Caenorhabditis elegans.